A 137-amino-acid polypeptide reads, in one-letter code: Flagellar basal body rod protein FlgB (137 aa).

This sequence belongs to the flagella basal body rod proteins family. In terms of assembly, the basal body constitutes a major portion of the flagellar organelle and consists of a number of rings mounted on a central rod. In Gram-negative bacteria, at least four rings, L, P, S and M are present, whereas Gram-positive bacteria lack the L and P rings. The rod consists of about 26 subunits of FlgG in the distal portion, and FlgB, FlgC and FlgF build up the proximal portion of the rod with about 6 subunits each. Rod assembly occurs by export via the flagellum-specific pathway of its constituent proteins and by their incorporation into the rod structure in the probable order of FlgB, FlgC, FlgF and FlgG. Another protein, FliE, also assembles onto the stable rod structure.

It is found in the bacterial flagellum basal body. In terms of biological role, structural component of flagellum, the bacterial motility apparatus. Part of the rod structure of flagellar basal body. The polypeptide is Flagellar basal body rod protein FlgB (Yersinia ruckeri).